Consider the following 346-residue polypeptide: Probable electron transfer flavoprotein subunit alpha, mitochondrial (346 aa).

Residue 285 to 313 (LYVAIGISGAIQHLAGMKESKMIIAINKD) participates in FAD binding.

The protein belongs to the ETF alpha-subunit/FixB family. As to quaternary structure, heterodimer of an alpha and a beta subunit. FAD serves as cofactor.

The protein localises to the mitochondrion matrix. The electron transfer flavoprotein serves as a specific electron acceptor for several dehydrogenases, including five acyl-CoA dehydrogenases, glutaryl-CoA and sarcosine dehydrogenase. It transfers the electrons to the main mitochondrial respiratory chain via ETF-ubiquinone oxidoreductase (ETF dehydrogenase). In Cryptococcus gattii serotype B (strain WM276 / ATCC MYA-4071) (Filobasidiella gattii), this protein is Probable electron transfer flavoprotein subunit alpha, mitochondrial (ETF1).